The following is an 874-amino-acid chain: Cap-specific mRNA (nucleoside-2'-O-)-methyltransferase 1A (874 aa).

A compositionally biased stretch (basic and acidic residues) spans 1–10 (MSERGDDDRT). Residues 1 to 64 (MSERGDDDRT…APPTKQKTKA (64 aa)) are disordered. A G-patch domain is found at 60–106 (QKTKAEEMMERMGYKAGEGLGKNKQGIQEPVALSTQRGKTGLGHEGA). In terms of domain architecture, RrmJ-type SAM-dependent 2'-O-MTase spans 211–440 (FFQNRAAMKT…ERYITCKGLR (230 aa)). 2 residues coordinate S-adenosyl-L-methionine: G273 and D354. The active-site Proton acceptor is the K394. Residues 535-555 (PNKQRPRGGDRGSRNGNQERL) form a disordered region.

It catalyses the reaction a 5'-end (N(7)-methyl 5'-triphosphoguanosine)-ribonucleoside in mRNA + S-adenosyl-L-methionine = a 5'-end (N(7)-methyl 5'-triphosphoguanosine)-(2'-O-methyl-ribonucleoside) in mRNA + S-adenosyl-L-homocysteine + H(+). S-adenosyl-L-methionine-dependent methyltransferase that mediates mRNA cap1 2'-O-ribose methylation to the 5'-cap structure of mRNAs. Methylates the ribose of the first nucleotide of a m(7)GpppG-capped mRNA to produce m(7)GpppNmp (cap1). Cap1 modification is linked to higher levels of translation. This chain is Cap-specific mRNA (nucleoside-2'-O-)-methyltransferase 1A, found in Caenorhabditis briggsae.